The sequence spans 799 residues: 1,4-alpha-glucan-branching enzyme 2, chloroplastic/amyloplastic (799 aa).

The N-terminal 57 residues, 1-57 (MAFRVSGAVLGGAVRAPRLTGGGEGSLVFRHTGLFLTRGARVGCSGTHGAMRAAAAA), are a transit peptide targeting the chloroplast. (1,4-alpha-D-glucosyl)n is bound by residues Trp196 and Lys232. Asp447 functions as the Nucleophile in the catalytic mechanism. The active-site Proton donor is the Glu502.

Belongs to the glycosyl hydrolase 13 family. GlgB subfamily. Monomer.

It localises to the plastid. It is found in the chloroplast. The protein resides in the amyloplast. It catalyses the reaction Transfers a segment of a (1-&gt;4)-alpha-D-glucan chain to a primary hydroxy group in a similar glucan chain.. The protein operates within glycan biosynthesis; starch biosynthesis. Functionally, catalyzes the formation of the alpha-1,6-glucosidic linkages in starch by scission of a 1,4-alpha-linked oligosaccharide from growing alpha-1,4-glucan chains and the subsequent attachment of the oligosaccharide to the alpha-1,6 position. The chain is 1,4-alpha-glucan-branching enzyme 2, chloroplastic/amyloplastic (SBE1) from Zea mays (Maize).